A 249-amino-acid chain; its full sequence is 3-deoxy-manno-octulosonate cytidylyltransferase (249 aa).

The protein belongs to the KdsB family.

The protein localises to the cytoplasm. It catalyses the reaction 3-deoxy-alpha-D-manno-oct-2-ulosonate + CTP = CMP-3-deoxy-beta-D-manno-octulosonate + diphosphate. It participates in nucleotide-sugar biosynthesis; CMP-3-deoxy-D-manno-octulosonate biosynthesis; CMP-3-deoxy-D-manno-octulosonate from 3-deoxy-D-manno-octulosonate and CTP: step 1/1. It functions in the pathway bacterial outer membrane biogenesis; lipopolysaccharide biosynthesis. Functionally, activates KDO (a required 8-carbon sugar) for incorporation into bacterial lipopolysaccharide in Gram-negative bacteria. In Oleidesulfovibrio alaskensis (strain ATCC BAA-1058 / DSM 17464 / G20) (Desulfovibrio alaskensis), this protein is 3-deoxy-manno-octulosonate cytidylyltransferase.